The sequence spans 233 residues: Homeobox protein EMX1 (233 aa).

The homeobox DNA-binding region spans 135–194 (PKRIRTAFSPSQLLRLERAFEKNHYVVGAERKQLASSLSLSETQVKVWFQNRRTKYKRQK). The segment at 192-233 (RQKLEEEGPDSDQKKKGSHHINRWRLATKQPNGEDIDVTSND) is disordered. The segment covering 193 to 206 (QKLEEEGPDSDQKK) has biased composition (basic and acidic residues).

The protein belongs to the EMX homeobox family.

Its subcellular location is the nucleus. May function in combinations with OTX1/2 to specify cell fates in the developing central nervous system. In Xenopus tropicalis (Western clawed frog), this protein is Homeobox protein EMX1 (emx1).